Here is a 178-residue protein sequence, read N- to C-terminus: Large ribosomal subunit protein uL6 (178 aa).

The protein belongs to the universal ribosomal protein uL6 family. As to quaternary structure, part of the 50S ribosomal subunit.

In terms of biological role, this protein binds to the 23S rRNA, and is important in its secondary structure. It is located near the subunit interface in the base of the L7/L12 stalk, and near the tRNA binding site of the peptidyltransferase center. The polypeptide is Large ribosomal subunit protein uL6 (Levilactobacillus brevis (strain ATCC 367 / BCRC 12310 / CIP 105137 / JCM 1170 / LMG 11437 / NCIMB 947 / NCTC 947) (Lactobacillus brevis)).